A 1080-amino-acid polypeptide reads, in one-letter code: Origin recognition complex subunit 3 (1080 aa).

3 disordered regions span residues 92 to 112 (YGIS…DDSS), 566 to 701 (TIKL…PKRI), and 869 to 902 (IKNE…ENEQ). Basic and acidic residues predominate over residues 651–661 (IKSDLECNDND). Over residues 662–671 (KDNDDNDNDI) the composition is skewed to acidic residues. Composition is skewed to low complexity over residues 672–688 (NENN…NSNN) and 875–896 (QQQQ…QQQQ).

It belongs to the ORC3 family. As to quaternary structure, ORC is composed of six subunits.

It is found in the nucleus. In terms of biological role, component of the origin recognition complex (ORC) that binds origins of replication. DNA-binding is ATP-dependent, however specific DNA sequences that define origins of replication have not been identified so far. ORC is required to assemble the pre-replication complex necessary to initiate DNA replication. The polypeptide is Origin recognition complex subunit 3 (orcC) (Dictyostelium discoideum (Social amoeba)).